We begin with the raw amino-acid sequence, 289 residues long: Proteasome assembly chaperone 1 (289 aa).

The disordered stretch occupies residues 1-38 (MAATFFGEVVKAPCRAGTEEEEEEEEQSRRDTPEDREV). An N-acetylalanine modification is found at Ala-2. Phosphothreonine is present on Thr-18. The span at 27 to 38 (QSRRDTPEDREV) shows a compositional bias: basic and acidic residues. Thr-55 is subject to Phosphothreonine. Ser-181 bears the Phosphoserine mark. At Lys-265 the chain carries N6-acetyllysine.

The protein belongs to the PSMG1 family. In terms of assembly, forms a heterodimer with PSMG2. The PSMG1-PSMG2 heterodimer interacts directly with the PSMA5 and PSMA7 proteasome alpha subunits. Degraded by the proteasome upon completion of 20S proteasome maturation. As to expression, highly expressed in testis with moderate expression in brain, liver and kidney and low levels in heart, skeletal muscle and pancreas.

It localises to the cytoplasm. The protein resides in the endoplasmic reticulum. In terms of biological role, chaperone protein which promotes assembly of the 20S proteasome as part of a heterodimer with PSMG2. The PSMG1-PSMG2 heterodimer binds to the PSMA5 and PSMA7 proteasome subunits, promotes assembly of the proteasome alpha subunits into the heteroheptameric alpha ring and prevents alpha ring dimerization. The sequence is that of Proteasome assembly chaperone 1 from Mus musculus (Mouse).